Reading from the N-terminus, the 451-residue chain is Velvet complex subunit 2 (451 aa).

Disordered regions lie at residues 1-95, 205-312, and 426-451; these read MNTT…PRSI, PGQS…QTNP, and PIRKDGKDGPGKGGKDGSRGDDDDDY. 3 stretches are compositionally biased toward polar residues: residues 18 to 28, 40 to 62, and 205 to 217; these read TMPSLHDTTYR, MPQTMASQHSTISAYEQYNNSLP, and PGQSQREPTSPTY. Residues 92–428 enclose the Velvet domain; the sequence is PRSITVDGRK…ATQGIKIPIR (337 aa). The span at 267–283 shows a compositional bias: low complexity; it reads PQQSNYYYPQPSQSIPS. The segment covering 427–445 has biased composition (basic and acidic residues); it reads IRKDGKDGPGKGGKDGSRG.

The protein belongs to the velvet family. VelB subfamily. As to quaternary structure, component of the heterotrimeric velvet complex composed of LAE1, VEL1 and VEL2; VEL1 acting as a bridging protein between LAE1 and VEL2. Forms a heterodimeric complex with VOS1; the formation of the VEL2-VOS1 complex is light-dependent.

It localises to the nucleus. Its subcellular location is the cytoplasm. Its function is as follows. Component of the velvet transcription factor complex that controls sexual/asexual developmental ratio in response to light, promoting sexual development in the darkness while stimulating asexual sporulation under illumination. The velvet complex acts as a global regulator for secondary metabolite gene expression. Component of the VEL2-VOS1 heterodimeric complex that plays a dual role in activating genes associated with spore maturation and repressing certain development-associated genes. The VEL2-VOS1 complex binds DNA through the DNA-binding domain of VOS1 that recognizes an 11-nucleotide consensus sequence 5'-CTGGCCGCGGC-3' consisting of two motifs in the promoters of key developmental regulatory genes. Controls the expression of the oxalic acid and melanin gene clusters. Involved in the resistance to oxidative stress. Required for full virulence. The protein is Velvet complex subunit 2 of Botryotinia fuckeliana (strain B05.10) (Noble rot fungus).